Consider the following 141-residue polypeptide: 3-hydroxyacyl-[acyl-carrier-protein] dehydratase FabZ (141 aa).

The active site involves His49.

This sequence belongs to the thioester dehydratase family. FabZ subfamily.

The protein resides in the cytoplasm. The enzyme catalyses a (3R)-hydroxyacyl-[ACP] = a (2E)-enoyl-[ACP] + H2O. In terms of biological role, involved in unsaturated fatty acids biosynthesis. Catalyzes the dehydration of short chain beta-hydroxyacyl-ACPs and long chain saturated and unsaturated beta-hydroxyacyl-ACPs. In Fusobacterium nucleatum subsp. nucleatum (strain ATCC 25586 / DSM 15643 / BCRC 10681 / CIP 101130 / JCM 8532 / KCTC 2640 / LMG 13131 / VPI 4355), this protein is 3-hydroxyacyl-[acyl-carrier-protein] dehydratase FabZ.